The chain runs to 158 residues: SsrA-binding protein (158 aa).

Belongs to the SmpB family.

It localises to the cytoplasm. In terms of biological role, required for rescue of stalled ribosomes mediated by trans-translation. Binds to transfer-messenger RNA (tmRNA), required for stable association of tmRNA with ribosomes. tmRNA and SmpB together mimic tRNA shape, replacing the anticodon stem-loop with SmpB. tmRNA is encoded by the ssrA gene; the 2 termini fold to resemble tRNA(Ala) and it encodes a 'tag peptide', a short internal open reading frame. During trans-translation Ala-aminoacylated tmRNA acts like a tRNA, entering the A-site of stalled ribosomes, displacing the stalled mRNA. The ribosome then switches to translate the ORF on the tmRNA; the nascent peptide is terminated with the 'tag peptide' encoded by the tmRNA and targeted for degradation. The ribosome is freed to recommence translation, which seems to be the essential function of trans-translation. The chain is SsrA-binding protein from Glaesserella parasuis serovar 5 (strain SH0165) (Haemophilus parasuis).